The chain runs to 113 residues: Na(+)/H(+) antiporter subunit C (113 aa).

A run of 3 helical transmembrane segments spans residues 4 to 21, 28 to 47, and 67 to 89; these read LMAV…YLLL, VIIG…LTMG, and PLPQ…FILV.

This sequence belongs to the CPA3 antiporters (TC 2.A.63) subunit C family. In terms of assembly, forms a heterooligomeric complex that consists of seven subunits: MrpA, MrpB, MrpC, MrpD, MrpE, MrpF and MrpG.

Its subcellular location is the cell membrane. In terms of biological role, mrp complex is a Na(+)/H(+) antiporter that is considered to be the major Na(+) excretion system in B.subtilis. Has a major role in Na(+) resistance and a minor role in Na(+)- and K(+)-dependent pH homeostasis as compared to TetB. MrpA may be the actual Na(+)/H(+) antiporter, although the six other Mrp proteins are all required for Na(+)/H(+) antiport activity and Na(+) resistance. MrpA is required for initiation of sporulation when external Na(+) concentration increases. Also transports Li(+) but not K(+), Ca(2+) or Mg(2+). This Bacillus subtilis (strain 168) protein is Na(+)/H(+) antiporter subunit C (mrpC).